Consider the following 541-residue polypeptide: Chaperonin GroEL 1 (541 aa).

ATP is bound by residues 29–32 (TLGP), 86–90 (DGTTT), Gly-413, 477–479 (NAA), and Asp-493.

Belongs to the chaperonin (HSP60) family. Forms a cylinder of 14 subunits composed of two heptameric rings stacked back-to-back. Interacts with the co-chaperonin GroES.

It is found in the cytoplasm. The enzyme catalyses ATP + H2O + a folded polypeptide = ADP + phosphate + an unfolded polypeptide.. Functionally, together with its co-chaperonin GroES, plays an essential role in assisting protein folding. The GroEL-GroES system forms a nano-cage that allows encapsulation of the non-native substrate proteins and provides a physical environment optimized to promote and accelerate protein folding. In Paenarthrobacter aurescens (strain TC1), this protein is Chaperonin GroEL 1.